Consider the following 89-residue polypeptide: Small ribosomal subunit protein uS15 (89 aa).

The span at 1–21 shows a compositional bias: basic and acidic residues; it reads MSVDAETKTKIIKDNARDKND. Residues 1 to 26 are disordered; sequence MSVDAETKTKIIKDNARDKNDTGSPE.

It belongs to the universal ribosomal protein uS15 family. As to quaternary structure, part of the 30S ribosomal subunit. Forms a bridge to the 50S subunit in the 70S ribosome, contacting the 23S rRNA.

In terms of biological role, one of the primary rRNA binding proteins, it binds directly to 16S rRNA where it helps nucleate assembly of the platform of the 30S subunit by binding and bridging several RNA helices of the 16S rRNA. Functionally, forms an intersubunit bridge (bridge B4) with the 23S rRNA of the 50S subunit in the ribosome. The polypeptide is Small ribosomal subunit protein uS15 (Erythrobacter litoralis (strain HTCC2594)).